The chain runs to 405 residues: Potassium channel subfamily K member 13 (405 aa).

The Cytoplasmic portion of the chain corresponds to 1 to 19 (MAGRGCSCSPGHLNEDNAR). A helical membrane pass occupies residues 20 to 40 (FLLLAGLILLYLLGGAAVFSA). N-linked (GlcNAc...) asparagine glycosylation is found at N59 and N65. The segment at residues 95–115 (WDFTGAFYFVGTVVTTIGFGM) is an intramembrane region (pore-forming). Residues T110, I111, and G112 each contribute to the K(+) site. The tract at residues 110–115 (TIGFGM) is selectivity filter 1. Residues 125–145 (VFLIFYGLIGCASTILFFNLF) form a helical membrane-spanning segment. Residues 146–193 (LERLITVIAYVMRTCHHQQLRRRGTVARDNRKAPRKGEADSLAGWKPS) are Cytoplasmic-facing. A helical membrane pass occupies residues 194–214 (VYYVMLILCLASVAISCGASA). The pore-forming intramembrane region spans 224 to 244 (YFDSVYFCFVASSTIGFGDLV). K(+) contacts are provided by T237, I238, G239, and F240. The interval 237–242 (TIGFGD) is selectivity filter 2. The helical transmembrane segment at 263–283 (FFILMGVCCIYSMFNVISILI) threads the bilayer. Topologically, residues 284–405 (KQTVNWILRK…NRLAETSGDR (122 aa)) are cytoplasmic.

The protein belongs to the two pore domain potassium channel (TC 1.A.1.8) family. As to quaternary structure, homodimer. Heterodimer with KCNK12. In terms of tissue distribution, ubiquitous. In brain expression is rather low and restricted to the olfactory bulb and tubercle, to the ventromedial hypothalamic nucleus, lateral septal nucleus dorsal, lateral mammillary nucleus, lateral parabrachial nuclei, reticular nucleus and reunions nuclei.

The protein resides in the cell membrane. It carries out the reaction K(+)(in) = K(+)(out). With respect to regulation, the channel currents are activated by arachidonic acid, inhibited by volatile anesthetic halothane, partially inhibited by Ba(2+) ions and only weakly inhibited by extracellular acidification to pH 6. K(+) channel that conducts outward rectifying tonic currents potentiated by purinergic signals. Homo- and heterodimerizes to form functional channels with distinct regulatory and gating properties. Contributes most of K(+) currents at the plasma membrane of resting microglia. Maintains a depolarized membrane potential required for proper ramified microglia morphology and phagocytosis, selectively mediating microglial pruning of presynaptic compartments at hippocampal excitatory synapses. Upon local release of ATP caused by neuronal injury or infection, it is potentiated by P2RY12 and P2RX7 receptor signaling and contributes to ATP-triggered K(+) efflux underlying microglial NLRP3 inflammasome assembly and IL1B release. In Rattus norvegicus (Rat), this protein is Potassium channel subfamily K member 13.